Consider the following 566-residue polypeptide: Urease subunit alpha (566 aa).

Residues 128–566 (GGIDSHVHFI…LPMAQRYFLF (439 aa)) enclose the Urease domain. The Ni(2+) site is built by His-133, His-135, and Lys-216. Lys-216 is subject to N6-carboxylysine. Position 218 (His-218) interacts with substrate. 2 residues coordinate Ni(2+): His-245 and His-271. His-319 serves as the catalytic Proton donor. Residue Asp-359 coordinates Ni(2+).

Belongs to the metallo-dependent hydrolases superfamily. Urease alpha subunit family. As to quaternary structure, heterotrimer of UreA (gamma), UreB (beta) and UreC (alpha) subunits. Three heterotrimers associate to form the active enzyme. The cofactor is Ni cation. In terms of processing, carboxylation allows a single lysine to coordinate two nickel ions.

The protein resides in the cytoplasm. The catalysed reaction is urea + 2 H2O + H(+) = hydrogencarbonate + 2 NH4(+). The protein operates within nitrogen metabolism; urea degradation; CO(2) and NH(3) from urea (urease route): step 1/1. This is Urease subunit alpha from Nitrosococcus oceani (strain ATCC 19707 / BCRC 17464 / JCM 30415 / NCIMB 11848 / C-107).